A 280-amino-acid polypeptide reads, in one-letter code: Inner membrane ABC transporter permease protein YcjP (280 aa).

Residues 1–10 (MATNKRTLSR) are Cytoplasmic-facing. The helical transmembrane segment at 11–31 (IGFYCGLALFLIITLFPFFVM) threads the bilayer. The Periplasmic portion of the chain corresponds to 32-53 (LMTSFKGAKEAISLHPTLLPQQ). Residues 54-74 (WTLEHYVDIFNPMIFPFVDYF) traverse the membrane as a helical segment. In terms of domain architecture, ABC transmembrane type-1 spans 74-265 (FRNSLVVSVV…LPVVIMYALS (192 aa)). At 75–77 (RNS) the chain is on the cytoplasmic side. The chain crosses the membrane as a helical span at residues 78–98 (LVVSVVSSVVAVFLGILGAYA). Topologically, residues 99–117 (LSRLRFKGRMTINASFYTV) are periplasmic. Residues 118–138 (YMFSGILLVVPLFKIITALGI) traverse the membrane as a helical segment. At 139–140 (YD) the chain is on the cytoplasmic side. A helical transmembrane segment spans residues 141–161 (TEMALIITMVTQTLPTAVFML). The Periplasmic portion of the chain corresponds to 162 to 189 (KSYFDTIPDEIEEAAMMDGLNRLQIIFR). Residues 190 to 210 (ITVPLAMSGLISVFVYCFMVA) traverse the membrane as a helical segment. Topologically, residues 211–214 (WNDY) are cytoplasmic. Residues 215–235 (LFASIFLSSASNFTLPVGLNA) form a helical membrane-spanning segment. At 236–242 (LFSTPDY) the chain is on the periplasmic side. The chain crosses the membrane as a helical span at residues 243–263 (IWGRMMAASLVTALPVVIMYA). Residues 264-280 (LSERFIKSGLTAGGVKG) lie on the Cytoplasmic side of the membrane.

This sequence belongs to the binding-protein-dependent transport system permease family. MalFG subfamily.

It is found in the cell inner membrane. In terms of biological role, probably part of the binding-protein-dependent transport system YcjNOP. Probably responsible for the translocation of the substrate across the membrane. This is Inner membrane ABC transporter permease protein YcjP (ycjP) from Escherichia coli (strain K12).